A 335-amino-acid polypeptide reads, in one-letter code: 3-ketodihydrosphingosine reductase TSC10 (335 aa).

NADPH contacts are provided by glycine 42, serine 44, serine 45, and glycine 46. The GXSXG motif lies at 42-46 (GGSSG). Leucine 47 provides a ligand contact to NADP(+). 5 residues coordinate NADPH: arginine 67, aspartate 68, lysine 71, aspartate 95, and leucine 96. Aspartate 95 provides a ligand contact to NADP(+). Residues tyrosine 190, lysine 194, and isoleucine 223 each contribute to the NADP(+) site. The Proton acceptor role is filled by tyrosine 190. Residue lysine 194 is the Lowers pKa of active site Tyr of the active site. Residues 288-308 (TNNFLLDTLWLIVSSVGVPIW) traverse the membrane as a helical segment.

Belongs to the short-chain dehydrogenases/reductases (SDR) family.

The protein resides in the endoplasmic reticulum membrane. The catalysed reaction is sphinganine + NADP(+) = 3-oxosphinganine + NADPH + H(+). It functions in the pathway lipid metabolism; sphingolipid metabolism. Its function is as follows. Catalyzes the reduction of 3'-oxosphinganine (3-ketodihydrosphingosine/KDS) to sphinganine (dihydrosphingosine/DHS), the second step of de novo sphingolipid biosynthesis. The sequence is that of 3-ketodihydrosphingosine reductase TSC10 (TSC10) from Cryptococcus neoformans var. neoformans serotype D (strain B-3501A) (Filobasidiella neoformans).